A 130-amino-acid polypeptide reads, in one-letter code: Histone H2A type 1-B/E (130 aa).

The tract at residues 1–22 (MSGRGKQGGKARAKAKTRSSRA) is disordered. The residue at position 2 (Ser-2) is an N-acetylserine. Phosphoserine; by RPS6KA5 is present on Ser-2. At Arg-4 the chain carries Citrulline; alternate. Symmetric dimethylarginine; by PRMT5; alternate is present on Arg-4. Lys-6 and Lys-10 each carry N6-(2-hydroxyisobutyryl)lysine; alternate. Lys-6 bears the N6-acetyllysine; alternate mark. A compositionally biased stretch (basic residues) spans 7–19 (QGGKARAKAKTRS). Residues Lys-10 and Lys-14 each carry the N6-(beta-hydroxybutyryl)lysine; alternate modification. At Lys-10 the chain carries N6-lactoyllysine; alternate. The residue at position 10 (Lys-10) is an N6-succinyllysine; alternate. Lys-14 is covalently cross-linked (Glycyl lysine isopeptide (Lys-Gly) (interchain with G-Cter in ubiquitin); alternate). Lys-16 is covalently cross-linked (Glycyl lysine isopeptide (Lys-Gly) (interchain with G-Cter in ubiquitin)). The residue at position 37 (Lys-37) is an N6-(2-hydroxyisobutyryl)lysine; alternate. Lys-37 carries the N6-(beta-hydroxybutyryl)lysine; alternate modification. The residue at position 37 (Lys-37) is an N6-crotonyllysine; alternate. Lys-75 and Lys-76 each carry N6-(2-hydroxyisobutyryl)lysine. Lys-96 carries the N6-(2-hydroxyisobutyryl)lysine; alternate modification. Lys-96 carries the post-translational modification N6-(beta-hydroxybutyryl)lysine; alternate. Lys-96 carries the post-translational modification N6-succinyllysine; alternate. Lys-96 bears the N6-glutaryllysine; alternate mark. N5-methylglutamine is present on Gln-105. N6-(2-hydroxyisobutyryl)lysine; alternate is present on Lys-119. Lys-119 bears the N6-(beta-hydroxybutyryl)lysine; alternate mark. Lys-119 and Lys-120 each carry N6-crotonyllysine; alternate. Residues Lys-119 and Lys-120 each carry the N6-glutaryllysine; alternate modification. A Glycyl lysine isopeptide (Lys-Gly) (interchain with G-Cter in ubiquitin); alternate cross-link involves residue Lys-120. Phosphothreonine; by DCAF1 is present on Thr-121. Residue Lys-126 is modified to N6-crotonyllysine; alternate. Lys-126 carries the N6-glutaryllysine; alternate modification.

Belongs to the histone H2A family. As to quaternary structure, the nucleosome is a histone octamer containing two molecules each of H2A, H2B, H3 and H4 assembled in one H3-H4 heterotetramer and two H2A-H2B heterodimers. The octamer wraps approximately 147 bp of DNA. In terms of processing, deiminated on Arg-4 in granulocytes upon calcium entry. Monoubiquitination of Lys-120 (H2AK119Ub) by RING1, TRIM37 and RNF2/RING2 complex gives a specific tag for epigenetic transcriptional repression and participates in X chromosome inactivation of female mammals. It is involved in the initiation of both imprinted and random X inactivation. Ubiquitinated H2A is enriched in inactive X chromosome chromatin. Ubiquitination of H2A functions downstream of methylation of 'Lys-27' of histone H3 (H3K27me). H2AK119Ub by RNF2/RING2 can also be induced by ultraviolet and may be involved in DNA repair. Monoubiquitination of Lys-120 (H2AK119Ub) by TRIM37 may promote transformation of cells in a number of breast cancers. Following DNA double-strand breaks (DSBs), it is ubiquitinated through 'Lys-63' linkage of ubiquitin moieties by the E2 ligase UBE2N and the E3 ligases RNF8 and RNF168, leading to the recruitment of repair proteins to sites of DNA damage. Ubiquitination at Lys-14 and Lys-16 (H2AK13Ub and H2AK15Ub, respectively) in response to DNA damage is initiated by RNF168 that mediates monoubiquitination at these 2 sites, and 'Lys-63'-linked ubiquitin are then conjugated to monoubiquitin; RNF8 is able to extend 'Lys-63'-linked ubiquitin chains in vitro. Deubiquitinated by USP51 at Lys-14 and Lys-16 (H2AK13Ub and H2AK15Ub, respectively) after damaged DNA is repaired. H2AK119Ub and ionizing radiation-induced 'Lys-63'-linked ubiquitination (H2AK13Ub and H2AK15Ub) are distinct events. Post-translationally, phosphorylation on Ser-2 (H2AS1ph) is enhanced during mitosis. Phosphorylation on Ser-2 by RPS6KA5/MSK1 directly represses transcription. Acetylation of H3 inhibits Ser-2 phosphorylation by RPS6KA5/MSK1. Phosphorylation at Thr-121 (H2AT120ph) by DCAF1 is present in the regulatory region of many tumor suppresor genes and down-regulates their transcription. In terms of processing, glutamine methylation at Gln-105 (H2AQ104me) by FBL is specifically dedicated to polymerase I. It is present at 35S ribosomal DNA locus and impairs binding of the FACT complex. Symmetric dimethylation on Arg-4 by the PRDM1/PRMT5 complex may play a crucial role in the germ-cell lineage. Post-translationally, crotonylation (Kcr) is specifically present in male germ cells and marks testis-specific genes in post-meiotic cells, including X-linked genes that escape sex chromosome inactivation in haploid cells. Crotonylation marks active promoters and enhancers and confers resistance to transcriptional repressors. It is also associated with post-meiotically activated genes on autosomes. In terms of processing, lactylated in macrophages by EP300/P300 by using lactoyl-CoA directly derived from endogenous or exogenous lactate, leading to stimulates gene transcription.

Its subcellular location is the nucleus. It is found in the chromosome. In terms of biological role, core component of nucleosome. Nucleosomes wrap and compact DNA into chromatin, limiting DNA accessibility to the cellular machineries which require DNA as a template. Histones thereby play a central role in transcription regulation, DNA repair, DNA replication and chromosomal stability. DNA accessibility is regulated via a complex set of post-translational modifications of histones, also called histone code, and nucleosome remodeling. This chain is Histone H2A type 1-B/E, found in Homo sapiens (Human).